The sequence spans 137 residues: Small ribosomal subunit protein uS9 (137 aa).

The span at Lys-106–Ala-117 shows a compositional bias: basic and acidic residues. Positions Lys-106 to Arg-137 are disordered. A compositionally biased stretch (basic residues) spans Lys-118–Arg-137.

The protein belongs to the universal ribosomal protein uS9 family.

The polypeptide is Small ribosomal subunit protein uS9 (Thermosynechococcus vestitus (strain NIES-2133 / IAM M-273 / BP-1)).